The sequence spans 557 residues: Leucine-rich glioma-inactivated protein 1 (557 aa).

An N-terminal signal peptide occupies residues 1–34 (MESERSKRMGNACIPLKRIAYFLCLLSALLLTEG). An LRRNT domain is found at 35–72 (KKPAKPKCPAVCTCTKDNALCENARSIPRTVPPDVISL). LRR repeat units follow at residues 92–113 (SLQL…AFIG), 116–137 (HLEY…TFRG), and 140–161 (SLIH…IFKG). The LRRCT domain occupies 173-223 (NSFNCDCKLKWLVEWLGHTNATVEDIYCEGPPEYKKRKINSLSSKDFDCII). A glycan (N-linked (GlcNAc...) asparagine) is linked at Asn-192. EAR repeat units lie at residues 225 to 267 (EFAK…EWDH), 271 to 313 (TFRN…KRDS), 317 to 364 (KFIK…KWNG), 366 to 415 (GFYS…QWNK), 419 to 462 (SFTN…KWGG), 464 to 506 (SFQD…NWDA), and 510 to 552 (KFVK…KHVI). Asn-277 carries an N-linked (GlcNAc...) asparagine glycan. A glycan (N-linked (GlcNAc...) asparagine) is linked at Asn-422.

In terms of assembly, oligomer. Interacts with KCNA1 within a complex containing KCNA1, KCNA4 and KCNAB1. Part of a complex containing ADAM22, DLG4/PSD95 and CACNG2 (stargazin). Can bind to ADAM11 and ADAM23. Glycosylated.

Its subcellular location is the secreted. The protein localises to the synapse. The protein resides in the cytoplasm. In terms of biological role, regulates voltage-gated potassium channels assembled from KCNA1, KCNA4 and KCNAB1. It slows down channel inactivation by precluding channel closure mediated by the KCNAB1 subunit. Ligand for ADAM22 that positively regulates synaptic transmission mediated by AMPA-type glutamate receptors. Plays a role in suppressing the production of MMP1/3 through the phosphatidylinositol 3-kinase/ERK pathway. The polypeptide is Leucine-rich glioma-inactivated protein 1 (LGI1) (Pan troglodytes (Chimpanzee)).